The following is a 420-amino-acid chain: Protein TabA (420 aa).

K57 is modified (N6-(pyridoxal phosphate)lysine).

It belongs to the Orn/Lys/Arg decarboxylase class-II family. Pyridoxal 5'-phosphate serves as cofactor.

Functionally, involved in tabtoxin production and pathogenicity. The chain is Protein TabA (tabA) from Pseudomonas amygdali pv. tabaci (Pseudomonas syringae pv. tabaci).